A 184-amino-acid polypeptide reads, in one-letter code: CDP-archaeol synthase (184 aa).

Transmembrane regions (helical) follow at residues 4-24, 54-74, 86-106, 122-142, and 145-165; these read IIMV…NPGA, FIGG…IIYI, IISA…GDIT, GSLL…FIFA, and FFLE…LTPP.

This sequence belongs to the CDP-archaeol synthase family. Mg(2+) is required as a cofactor.

It localises to the cell membrane. It catalyses the reaction 2,3-bis-O-(geranylgeranyl)-sn-glycerol 1-phosphate + CTP + H(+) = CDP-2,3-bis-O-(geranylgeranyl)-sn-glycerol + diphosphate. It participates in membrane lipid metabolism; glycerophospholipid metabolism. In terms of biological role, catalyzes the formation of CDP-2,3-bis-(O-geranylgeranyl)-sn-glycerol (CDP-archaeol) from 2,3-bis-(O-geranylgeranyl)-sn-glycerol 1-phosphate (DGGGP) and CTP. This reaction is the third ether-bond-formation step in the biosynthesis of archaeal membrane lipids. The sequence is that of CDP-archaeol synthase from Picrophilus torridus (strain ATCC 700027 / DSM 9790 / JCM 10055 / NBRC 100828 / KAW 2/3).